A 417-amino-acid polypeptide reads, in one-letter code: Probable glucuronosyltransferase Os01g0926700 (417 aa).

Topologically, residues 1–3 are cytoplasmic; the sequence is MRR. Residues 4-24 traverse the membrane as a helical; Signal-anchor for type II membrane protein segment; it reads WVLAIAILAAAVCFFLGAQAQ. Residues 25-417 lie on the Lumenal side of the membrane; that stretch reads EVRQGHQTER…AGPVGDLKPW (393 aa). Residues asparagine 144 and asparagine 405 are each glycosylated (N-linked (GlcNAc...) asparagine).

This sequence belongs to the glycosyltransferase 47 family.

It localises to the golgi apparatus membrane. Involved in the synthesis of glucuronoxylan hemicellulose in secondary cell walls. The sequence is that of Probable glucuronosyltransferase Os01g0926700 from Oryza sativa subsp. japonica (Rice).